The chain runs to 506 residues: Cobyric acid synthase (506 aa).

One can recognise a GATase cobBQ-type domain in the interval 251–448 (DITIAIVQLP…LHGLFDSDAF (198 aa)). Residue Cys-332 is the Nucleophile of the active site. Residue His-440 is part of the active site.

This sequence belongs to the CobB/CobQ family. CobQ subfamily. In terms of assembly, homodimer.

It participates in cofactor biosynthesis; adenosylcobalamin biosynthesis. Functionally, catalyzes amidations at positions B, D, E, and G on adenosylcobyrinic A,C-diamide. NH(2) groups are provided by glutamine, and one molecule of ATP is hydrogenolyzed for each amidation. The chain is Cobyric acid synthase (cbiP) from Salmonella typhimurium (strain LT2 / SGSC1412 / ATCC 700720).